A 65-amino-acid polypeptide reads, in one-letter code: Large ribosomal subunit protein uL29 (65 aa).

The protein belongs to the universal ribosomal protein uL29 family.

In Buchnera aphidicola subsp. Acyrthosiphon pisum (strain 5A), this protein is Large ribosomal subunit protein uL29.